We begin with the raw amino-acid sequence, 309 residues long: Olfactory receptor 7A10 (309 aa).

At 1 to 25 (MKSWNNTIILEFLLLGISEEPELQA) the chain is on the extracellular side. Residue Asn5 is glycosylated (N-linked (GlcNAc...) asparagine). A helical transmembrane segment spans residues 26–46 (FLFGLFLSMYLVTVLGNLLII). The Cytoplasmic segment spans residues 47–54 (LATISDSH). Residues 55–75 (LHTPMYFFLSNLSFVDICFVS) traverse the membrane as a helical segment. Residues 76–99 (TTVPKMLVNIQTHNKVITYAGCIT) are Extracellular-facing. Residues Cys97 and Cys189 are joined by a disulfide bond. A helical transmembrane segment spans residues 100–120 (QMCFFLLFVGLDNFLLTVMAY). Over 121 to 139 (DRFVAICHPLHYMVIMNPQ) the chain is Cytoplasmic. A helical transmembrane segment spans residues 140 to 160 (LCGLLVLASWIMSVLNSMLQS). The Extracellular segment spans residues 161-197 (LMVLPLPFCTHMEIPHFFCEINQVVHLACSDTFLNDI). The helical transmembrane segment at 198–217 (VMYFAVALLGGGPLTGILYS) threads the bilayer. Over 218 to 237 (YSKIVSSIRAISSAQGKYKA) the chain is Cytoplasmic. The helical transmembrane segment at 238–258 (FSTCASHLSVVSLFYGTCLGV) threads the bilayer. Topologically, residues 259–271 (YLSSAATHNSHTG) are extracellular. The helical transmembrane segment at 272-292 (AAASVMYTVVTPMLNPFIYSL) threads the bilayer. Over 293–309 (RNKHIKGAMKTFFRGKQ) the chain is Cytoplasmic.

Belongs to the G-protein coupled receptor 1 family.

Its subcellular location is the cell membrane. Odorant receptor. The protein is Olfactory receptor 7A10 (OR7A10) of Homo sapiens (Human).